A 1726-amino-acid chain; its full sequence is Transcription elongation factor SPT6 (1726 aa).

Acidic residues-rich tracts occupy residues 1–18 (MSDFIESEAEESEEEFEE), 31–45 (EEDEEEEEENTEDQD), and 55–79 (DDDDVEEEEEEERGEPPAGEDSDSG). 3 disordered regions span residues 1–196 (MSDF…KGKK), 219–248 (AEFDTEAYDHAEEEEEDQDDESWDRPKKQT), and 482–512 (EVSEEDGEEAEVEEEEEEEEQKGPDLKQASR). Residue serine 90 is modified to Phosphoserine. Acidic residues predominate over residues 93-104 (DYLDDDDLDLIE). Residues 110–120 (KVKRRKKKYSR) are compositionally biased toward basic residues. 4 stretches are compositionally biased toward acidic residues: residues 146 to 157 (GDGEGEVEDGEA), 166 to 186 (DEEEEDDEESDIDDFIVDDDG), 219 to 240 (AEFDTEAYDHAEEEEEDQDDES), and 484 to 501 (SEEDGEEAEVEEEEEEEE). Basic and acidic residues predominate over residues 502-512 (QKGPDLKQASR). A coiled-coil region spans residues 806 to 865 (LKRRNAWREDEREKKQQDVENLKKFLLSKKPHVVAVSGENRDAHMVMEDIKRTISELEQN). The S1 motif domain occupies 1204–1273 (WNHFDSGSCP…EKFNVDLTCR (70 aa)). Positions 1316–1426 (YIKRVIAHPS…LLGHKYFHEC (111 aa)) constitute an SH2 domain. Threonine 1522 carries the post-translational modification Phosphothreonine. The residue at position 1525 (serine 1525) is a Phosphoserine. A compositionally biased stretch (polar residues) spans 1611 to 1627 (LMTPSYSYTTPGQQQAM). The segment at 1611–1726 (LMTPSYSYTT…ATPLLDEMDR (116 aa)) is disordered. Low complexity-rich tracts occupy residues 1628 to 1640 (TTPQYPSSTPQSS) and 1647 to 1656 (SSSTPSSSSS). Residues 1657–1669 (RVRTPQPKASSHT) are compositionally biased toward polar residues.

Belongs to the SPT6 family.

The protein localises to the nucleus. Histone H3-H4 chaperone that plays a role in maintenance of chromatin structure during RNA polymerase II transcription elongation. Promotes the activation of the myogenic gene program by entailing erasure of the repressive H3K27me3 epigenetic mark through stabilization of the chromatin interaction of the H3K27 demethylase KDM6A. Plays an important role during early patterning and somitogenesis of the embryo. The polypeptide is Transcription elongation factor SPT6 (supt6h) (Danio rerio (Zebrafish)).